An 89-amino-acid polypeptide reads, in one-letter code: Mu-theraphotoxin-Phlo1a (89 aa).

Residues 1 to 22 (MKVSVLITLAVLGVMFVWTSAA) form the signal peptide. The propeptide occupies 23–52 (EQEDHGSDRRDSPALLKNLLGEEVFQSEER). 3 disulfides stabilise this stretch: Cys-54-Cys-68, Cys-61-Cys-73, and Cys-67-Cys-81. Ile-87 is subject to Isoleucine amide.

It belongs to the neurotoxin 10 (Hwtx-1) family. 39 (Jztx-34) subfamily. In terms of tissue distribution, expressed by the venom gland.

It localises to the secreted. Functionally, gating-modifier toxin that inhibits voltage-gated sodium channel Nav by shifting the threshold for channel activation to more positive potentials. This toxin moderately inhibits human Nav1.7/SCN9A (IC(50)=459 nM) and weakly inhibits hNav1.2/SCN2A and hNav1.5/SCN5A (&lt;20% inhibition at 1 uM peptide). Inhibition of Nav1.7 is voltage-dependent, with lower inhibition at more positive test pulses. This is Mu-theraphotoxin-Phlo1a from Phlogius sp. (Tarantula spider).